The primary structure comprises 469 residues: UDP-glycosyltransferase 43 (469 aa).

Residues serine 280, 345–346 (WV), 363–371 (HCGWNSILE), and 385–388 (YSEQ) each bind UDP-alpha-D-glucose.

It belongs to the UDP-glycosyltransferase family.

With respect to regulation, inhibited by Cu(2+) or Zn(2+). Its function is as follows. Glycosyltransferase that catalyzes the C-glucosylation of daidzein to puerarin. Shows activity with the isoflavones daidzein and genistein, but has no activity towards flavonoids such as 2-hydroxynaringenin. Can use UDP-glucose, but not UDP-galactose or UDP-glucuronic acid as sugar donor. Does not require bivalent cations for activity. The sequence is that of UDP-glycosyltransferase 43 from Pueraria montana var. lobata (Kudzu vine).